The sequence spans 347 residues: UDP-glucose 4-epimerase (347 aa).

NAD(+) is bound by residues G11–I13, D32–N36, D65–I66, F87, and K91. Position 131–133 (S131–T133) interacts with substrate. Y156 (proton acceptor) is an active-site residue. NAD(+) contacts are provided by K160 and Y184. Residues Y184–N186, N205–L207, N223–F225, R238, and R299–D302 contribute to the substrate site.

The protein belongs to the NAD(P)-dependent epimerase/dehydratase family. As to quaternary structure, homodimer. NAD(+) is required as a cofactor.

It catalyses the reaction UDP-alpha-D-glucose = UDP-alpha-D-galactose. The enzyme catalyses UDP-N-acetyl-alpha-D-glucosamine = UDP-N-acetyl-alpha-D-galactosamine. It participates in carbohydrate metabolism; galactose metabolism. Functionally, catalyzes two distinct but analogous reactions: the reversible epimerization of UDP-glucose to UDP-galactose and the reversible epimerization of UDP-N-acetylglucosamine to UDP-N-acetylgalactosamine. The reaction with UDP-Gal plays a critical role in the Leloir pathway of galactose catabolism in which galactose is converted to the glycolytic intermediate glucose 6-phosphate. It contributes to the catabolism of dietary galactose and enables the endogenous biosynthesis of both UDP-Gal and UDP-GalNAc when exogenous sources are limited. Both UDP-sugar interconversions are important in the synthesis of glycoproteins and glycolipids. This Mus musculus (Mouse) protein is UDP-glucose 4-epimerase (Gale).